The chain runs to 132 residues: MVEAFCATWKLTNSQNFDEYMKALGVGFATRQVGNVTKPTVIISQEGDKVVIRTLSTFKNTEISFQLGEEFDETTADDRNCKSVVSLDGDKLVHIQKWDGKETNFVREIKDGKMVMTLTFGDVVAVRHYEKA.

Valine 2 carries the N-acetylvaline modification. An a fatty acid-binding site is contributed by 127 to 129; that stretch reads RHY.

It belongs to the calycin superfamily. Fatty-acid binding protein (FABP) family. In terms of tissue distribution, expressed in brain and other neural tissues.

It is found in the cytoplasm. Functionally, B-FABP could be involved in the transport of a so far unknown hydrophobic ligand with potential morphogenic activity during CNS development. It is required for the establishment of the radial glial fiber system in developing brain, a system that is necessary for the migration of immature neurons to establish cortical layers. The chain is Fatty acid-binding protein, brain (FABP7) from Homo sapiens (Human).